A 537-amino-acid polypeptide reads, in one-letter code: Eukaryotic translation initiation factor 3 subunit L (537 aa).

Residues 1–19 are compositionally biased toward basic and acidic residues; the sequence is MSRRVEFDMSHEDHTDRRR. The tract at residues 1 to 28 is disordered; it reads MSRRVEFDMSHEDHTDRRRTNTFSSEED. One can recognise a PCI domain in the interval 297-485; that stretch reads EATKMFVNCL…GPSTVDDDEP (189 aa).

The protein belongs to the eIF-3 subunit L family. Component of the eukaryotic translation initiation factor 3 (eIF-3) complex.

Its subcellular location is the cytoplasm. Component of the eukaryotic translation initiation factor 3 (eIF-3) complex, which is involved in protein synthesis of a specialized repertoire of mRNAs and, together with other initiation factors, stimulates binding of mRNA and methionyl-tRNAi to the 40S ribosome. The eIF-3 complex specifically targets and initiates translation of a subset of mRNAs involved in cell proliferation. The sequence is that of Eukaryotic translation initiation factor 3 subunit L from Caenorhabditis briggsae.